Consider the following 178-residue polypeptide: AIIPKQFLKRIERTGFGQFLFYEWRFDEAGNINPEFEPNKPRYAGASVLISRANFGCGSSREHAPWAIMDYGFRCVIAPSFADIFYNNCFKNGILPIKLSEEQVEDLFQRTAKHDNYQLNVDLNEKTITDDYGLRIEFDLDEHRRQFLLQGLDDIGLTLQHESEILAYEQKRAAKQGA.

This sequence belongs to the LeuD family. LeuD type 1 subfamily. In terms of assembly, heterodimer of LeuC and LeuD.

It catalyses the reaction (2R,3S)-3-isopropylmalate = (2S)-2-isopropylmalate. It functions in the pathway amino-acid biosynthesis; L-leucine biosynthesis; L-leucine from 3-methyl-2-oxobutanoate: step 2/4. In terms of biological role, catalyzes the isomerization between 2-isopropylmalate and 3-isopropylmalate, via the formation of 2-isopropylmaleate. This Paenibacillus polymyxa (Bacillus polymyxa) protein is 3-isopropylmalate dehydratase small subunit (leuD).